A 254-amino-acid chain; its full sequence is Alcohol dehydrogenase 2 (254 aa).

10–33 (FVAGLGGIGFDTSREIVKSGPKNL) contributes to the NAD(+) binding site. Ser-138 is a substrate binding site. Catalysis depends on Tyr-151, which acts as the Proton acceptor.

Belongs to the short-chain dehydrogenases/reductases (SDR) family. Homodimer.

The enzyme catalyses a primary alcohol + NAD(+) = an aldehyde + NADH + H(+). It catalyses the reaction a secondary alcohol + NAD(+) = a ketone + NADH + H(+). The sequence is that of Alcohol dehydrogenase 2 (Adh2) from Drosophila mulleri (Fruit fly).